Here is a 114-residue protein sequence, read N- to C-terminus: UPF0145 protein PYRAB04900 (114 aa).

Belongs to the UPF0145 family.

This Pyrococcus abyssi (strain GE5 / Orsay) protein is UPF0145 protein PYRAB04900.